A 205-amino-acid polypeptide reads, in one-letter code: Casparian strip membrane protein 4 (205 aa).

The Cytoplasmic portion of the chain corresponds to 1–58 (MDIEKTGSRREEEEPIVQKPKLEKGKGKAHVFAPPMNYSRIMEKHKQEKVSMAGWKRG). The helical transmembrane segment at 59–79 (VAIFDFVLRLIAAITAMAAAA) threads the bilayer. Over 80-109 (KMATTEETLPFFTQFLQFSADYTDLPTLSS) the chain is Extracellular. The chain crosses the membrane as a helical span at residues 110 to 130 (FVIVNSIVGGYLTLSLPFSIV). Residues 131-148 (CILRPLAVPPRLFLILCD) are Cytoplasmic-facing. The chain crosses the membrane as a helical span at residues 149–169 (TAMMGLTMVAASASAAIVYLA). The Extracellular segment spans residues 170–205 (HNGNSSSNWLPVCQQFGDFCKERVAPWWLPLLQRLF). An N-linked (GlcNAc...) asparagine glycan is attached at N173.

This sequence belongs to the Casparian strip membrane proteins (CASP) family. As to quaternary structure, homodimer and heterodimers.

It localises to the cell membrane. Its function is as follows. Regulates membrane-cell wall junctions and localized cell wall deposition. Required for establishment of the Casparian strip membrane domain (CSD) and the subsequent formation of Casparian strips, a cell wall modification of the root endodermis that determines an apoplastic barrier between the intraorganismal apoplasm and the extraorganismal apoplasm and prevents lateral diffusion. The chain is Casparian strip membrane protein 4 from Raphanus sativus (Radish).